Reading from the N-terminus, the 286-residue chain is Bifunctional protein FolD (286 aa).

NADP(+)-binding positions include 165-167 (GRS), serine 190, and valine 231.

Belongs to the tetrahydrofolate dehydrogenase/cyclohydrolase family. Homodimer.

It carries out the reaction (6R)-5,10-methylene-5,6,7,8-tetrahydrofolate + NADP(+) = (6R)-5,10-methenyltetrahydrofolate + NADPH. The enzyme catalyses (6R)-5,10-methenyltetrahydrofolate + H2O = (6R)-10-formyltetrahydrofolate + H(+). Its pathway is one-carbon metabolism; tetrahydrofolate interconversion. Functionally, catalyzes the oxidation of 5,10-methylenetetrahydrofolate to 5,10-methenyltetrahydrofolate and then the hydrolysis of 5,10-methenyltetrahydrofolate to 10-formyltetrahydrofolate. The polypeptide is Bifunctional protein FolD (Bacillus cereus (strain ZK / E33L)).